The primary structure comprises 1167 residues: Non-toxic nonhemagglutinin (1167 aa).

Residues 1 to 381 (MDIIDNVDIT…PQQIINLIDN (381 aa)) form a light chain nLC region. Residues 382 to 804 (NNILLIKSYI…LFNSKIQLTI (423 aa)) form an N-heavy chain nHN region. Residues 805-1167 (KNEKPEYNLL…LNDIYSWTLI (363 aa)) form a C-heavy chain nHC region.

It belongs to the botulism non-toxic nonhemagglutinin family.

Functionally, expression of the ptox operon (ntnh-orfX1-orfX2-orfX3-pmp1) in B.thuringiensis kills Anopheles but not Aedes mosquito 3rd instar larvae. The ntnh-pmp1 construct is about half as toxic. The sequence is that of Non-toxic nonhemagglutinin from Paraclostridium bifermentans (Clostridium bifermentans).